A 421-amino-acid polypeptide reads, in one-letter code: Tryptophan synthase beta chain (421 aa).

At lysine 110 the chain carries N6-(pyridoxal phosphate)lysine.

It belongs to the TrpB family. Tetramer of two alpha and two beta chains. Pyridoxal 5'-phosphate serves as cofactor.

The catalysed reaction is (1S,2R)-1-C-(indol-3-yl)glycerol 3-phosphate + L-serine = D-glyceraldehyde 3-phosphate + L-tryptophan + H2O. Its pathway is amino-acid biosynthesis; L-tryptophan biosynthesis; L-tryptophan from chorismate: step 5/5. The beta subunit is responsible for the synthesis of L-tryptophan from indole and L-serine. In Mycobacterium intracellulare, this protein is Tryptophan synthase beta chain (trpB).